Reading from the N-terminus, the 232-residue chain is Phosphatidylserine decarboxylase proenzyme (232 aa).

Ser201 acts as the Schiff-base intermediate with substrate; via pyruvic acid in catalysis. A Pyruvic acid (Ser); by autocatalysis modification is found at Ser201.

This sequence belongs to the phosphatidylserine decarboxylase family. PSD-A subfamily. In terms of assembly, heterodimer of a large membrane-associated beta subunit and a small pyruvoyl-containing alpha subunit. It depends on pyruvate as a cofactor. Is synthesized initially as an inactive proenzyme. Formation of the active enzyme involves a self-maturation process in which the active site pyruvoyl group is generated from an internal serine residue via an autocatalytic post-translational modification. Two non-identical subunits are generated from the proenzyme in this reaction, and the pyruvate is formed at the N-terminus of the alpha chain, which is derived from the carboxyl end of the proenzyme. The post-translation cleavage follows an unusual pathway, termed non-hydrolytic serinolysis, in which the side chain hydroxyl group of the serine supplies its oxygen atom to form the C-terminus of the beta chain, while the remainder of the serine residue undergoes an oxidative deamination to produce ammonia and the pyruvoyl prosthetic group on the alpha chain.

Its subcellular location is the cell membrane. The enzyme catalyses a 1,2-diacyl-sn-glycero-3-phospho-L-serine + H(+) = a 1,2-diacyl-sn-glycero-3-phosphoethanolamine + CO2. The protein operates within phospholipid metabolism; phosphatidylethanolamine biosynthesis; phosphatidylethanolamine from CDP-diacylglycerol: step 2/2. Catalyzes the formation of phosphatidylethanolamine (PtdEtn) from phosphatidylserine (PtdSer). The polypeptide is Phosphatidylserine decarboxylase proenzyme (Mycolicibacterium smegmatis (strain ATCC 700084 / mc(2)155) (Mycobacterium smegmatis)).